A 354-amino-acid chain; its full sequence is Guanine nucleotide-binding protein G(i) subunit alpha-1 (354 aa).

A lipid anchor (N-myristoyl glycine) is attached at Gly2. The S-palmitoyl cysteine moiety is linked to residue Cys3. The G-alpha domain maps to 32-354 (REVKLLLLGA…KNNLKDCGLF (323 aa)). A G1 motif region spans residues 35–48 (KLLLLGAGESGKST). GTP is bound by residues 43–48 (ESGKST), 150–151 (DS), and 175–178 (LRTR). Ser47 is a binding site for Mg(2+). The segment at 173–181 (DVLRTRVKT) is G2 motif. Thr181 serves as a coordination point for Mg(2+). The segment at 196–205 (FKMFDVGGQR) is G3 motif. Residues 200-204 (DVGGQ), 269-272 (NKKD), and Ala326 contribute to the GTP site. Residues 265-272 (ILFLNKKD) form a G4 motif region. Residues 324-329 (TCATDT) are G5 motif.

Belongs to the G-alpha family. G(i/o/t/z) subfamily. As to quaternary structure, heterotrimeric G proteins are composed of 3 units; alpha, beta and gamma. The alpha chain contains the guanine nucleotide binding site. Part of a spindle orientation complex at least composed of GNAI1, GPSM2 and NUMA1. Identified in complex with the beta subunit GNB1 and the gamma subunit GNG1. Identified in complex with the beta subunit GNB1 and the gamma subunit GNG2. Component of the TAS2R14-GNAI1 complex, consisting of TAS2R14, GNAI1, GNB1 and GNG2; within the complex interacts with TAS2R14; this complex plays a role in the perception of bitterness. GTP binding causes dissociation of the heterotrimer, liberating the individual subunits so that they can interact with downstream effector proteins. Interacts (GDP-bound form) with GPSM1; this inhibits guanine nucleotide exchange and GTP binding. Interacts (GDP-bound form) with GPSM2 (via GoLoco domains); this inhibits guanine nucleotide exchange. Interacts with RGS10; this strongly enhances GTP hydrolysis. Interacts with RGS1 and RGS16; this strongly enhances GTPase activity. Interacts with RGS4. Interacts with RGS12. Interacts (via active GTP- or inactive GDP-bound forms) with RGS14 (via RGS and GoLoco domains). Interacts with RGS3, RGS6, RGS7, RGS8, RGS17, RGS18 and RGS20 (in vitro). Interacts (GDP-bound form) with RIC8A (via C-terminus); promoting GNAI1 folding and association with the plasma membrane. Interacts (inactive GDP-bound form) with NUCB1 (via GBA motif); the interaction leads to activation of GNAI1. Interacts (inactive GDP-bound form) with CCDC88C/DAPLE (via GBA motif); the interaction leads to activation of GNAI1. Interacts (inactive GDP-bound form) with CCDC8A/GIV (via GBA motif). In terms of processing, myristoylation at Gly-2 is required for membrane anchoring before palmitoylation. Post-translationally, palmitoylation at Cys-3 varies with membrane lipid composition. As to expression, mainly expressed in the brain, lung and kidney.

The protein resides in the nucleus. It localises to the cytoplasm. It is found in the cell membrane. Its subcellular location is the cytoskeleton. The protein localises to the microtubule organizing center. The protein resides in the centrosome. It localises to the cell cortex. It is found in the membrane. The catalysed reaction is GTP + H2O = GDP + phosphate + H(+). Guanine nucleotide-binding proteins (G proteins) function as transducers downstream of G protein-coupled receptors (GPCRs) in numerous signaling cascades. The alpha chain contains the guanine nucleotide binding site and alternates between an active, GTP-bound state and an inactive, GDP-bound state. Signaling by an activated GPCR promotes GDP release and GTP binding. The alpha subunit has a low GTPase activity that converts bound GTP to GDP, thereby terminating the signal. Both GDP release and GTP hydrolysis are modulated by numerous regulatory proteins. Signaling is mediated via effector proteins, such as adenylate cyclase. Inhibits adenylate cyclase activity of ADCY1, ADCY5 and ADCY6, leading to decreased intracellular cAMP levels. The inactive GDP-bound form prevents the association of RGS14 with centrosomes and is required for the translocation of RGS14 from the cytoplasm to the plasma membrane. Required for normal cytokinesis during mitosis. Required for cortical dynein-dynactin complex recruitment during metaphase. The chain is Guanine nucleotide-binding protein G(i) subunit alpha-1 (GNAI1) from Cavia porcellus (Guinea pig).